Reading from the N-terminus, the 458-residue chain is Argininosuccinate lyase (458 aa).

The protein belongs to the lyase 1 family. Argininosuccinate lyase subfamily.

The protein localises to the cytoplasm. It catalyses the reaction 2-(N(omega)-L-arginino)succinate = fumarate + L-arginine. It functions in the pathway amino-acid biosynthesis; L-arginine biosynthesis; L-arginine from L-ornithine and carbamoyl phosphate: step 3/3. The protein is Argininosuccinate lyase of Neisseria meningitidis serogroup A / serotype 4A (strain DSM 15465 / Z2491).